Consider the following 457-residue polypeptide: RuvB-like helicase 1 (457 aa).

Position 72–79 (72–79) interacts with ATP; the sequence is GAPGTGKT.

Belongs to the RuvB family. As to quaternary structure, may form heterododecamers with RVB2. Component of the SWR1 chromatin remodeling complex, the INO80 chromatin remodeling complex, and of the R2TP complex.

The protein localises to the nucleus. The enzyme catalyses ATP + H2O = ADP + phosphate + H(+). In terms of biological role, DNA helicase which participates in several chromatin remodeling complexes, including the SWR1 and the INO80 complexes. The SWR1 complex mediates the ATP-dependent exchange of histone H2A for the H2A variant HZT1 leading to transcriptional regulation of selected genes by chromatin remodeling. The INO80 complex remodels chromatin by shifting nucleosomes and is involved in DNA repair. Also involved in pre-rRNA processing. In Debaryomyces hansenii (strain ATCC 36239 / CBS 767 / BCRC 21394 / JCM 1990 / NBRC 0083 / IGC 2968) (Yeast), this protein is RuvB-like helicase 1 (RBV1).